A 323-amino-acid chain; its full sequence is CIMIP2 protein CG18335 (323 aa).

It belongs to the CIMIP2 family.

It is found in the cytoplasm. It localises to the cytoskeleton. The protein resides in the cilium axoneme. Functionally, probable microtubule inner protein (MIP) part of the dynein-decorated doublet microtubules (DMTs) in cilium axoneme. This chain is CIMIP2 protein CG18335, found in Drosophila melanogaster (Fruit fly).